Here is a 611-residue protein sequence, read N- to C-terminus: Rho-related BTB domain-containing protein 3 (611 aa).

The tract at residues 1–175 (MSIHIVALGN…KELGATYLEL (175 aa)) is rho-like. BTB domains are found at residues 254–356 (VDVV…QWEE) and 420–487 (ADVV…CPAG). An interaction with Rab9 region spans residues 420–611 (ADVVFEIQGT…HSRKCRCLVM (192 aa)).

As to quaternary structure, interacts with RAB9A and RAB9B (at lower level compared to RAB9A-binding). Interacts with M6PRBP1/TIP47. Ubiquitous. Highly expressed in neural and cardiac tissues, pancreas, placenta and testis.

The protein localises to the golgi apparatus. Functionally, rab9-regulated ATPase required for endosome to Golgi transport. Involved in transport vesicle docking at the Golgi complex, possibly by participating in release M6PRBP1/TIP47 from vesicles to permit their efficient docking and fusion at the Golgi. Specifically binds Rab9, but not other Rab proteins. Has low intrinsic ATPase activity due to autoinhibition, which is relieved by Rab9. The polypeptide is Rho-related BTB domain-containing protein 3 (RHOBTB3) (Homo sapiens (Human)).